Consider the following 353-residue polypeptide: GTPase Obg (353 aa).

An Obg domain is found at 1–159; that stretch reads MKFLDEAKVY…RWIWLRLKLI (159 aa). The 168-residue stretch at 160-327 folds into the OBG-type G domain; that stretch reads ADAGLVGLPN…VLRALVAVIG (168 aa). Residues 166 to 173, 191 to 195, 212 to 215, 279 to 282, and 308 to 310 each bind GTP; these read GLPNAGKS, FTTLH, DIPG, NKID, and SGV. 2 residues coordinate Mg(2+): serine 173 and threonine 193.

This sequence belongs to the TRAFAC class OBG-HflX-like GTPase superfamily. OBG GTPase family. As to quaternary structure, monomer. Mg(2+) serves as cofactor.

It localises to the cytoplasm. Its function is as follows. An essential GTPase which binds GTP, GDP and possibly (p)ppGpp with moderate affinity, with high nucleotide exchange rates and a fairly low GTP hydrolysis rate. Plays a role in control of the cell cycle, stress response, ribosome biogenesis and in those bacteria that undergo differentiation, in morphogenesis control. This chain is GTPase Obg, found in Rhodopseudomonas palustris (strain TIE-1).